We begin with the raw amino-acid sequence, 187 residues long: UPF0340 protein stu1894 (187 aa).

It belongs to the UPF0340 family.

This is UPF0340 protein stu1894 from Streptococcus thermophilus (strain ATCC BAA-250 / LMG 18311).